Here is a 205-residue protein sequence, read N- to C-terminus: Penta-EF hand domain-containing protein 2 (205 aa).

EF-hand domains lie at glutamate 45 to proline 75, leucine 76 to leucine 111, and aspartate 119 to glutamine 141. Residues aspartate 54, asparagine 56, serine 58, threonine 60, glutamate 65, aspartate 89, asparagine 91, asparagine 93, glutamine 95, and glutamate 100 each contribute to the Ca(2+) site.

It belongs to the Peflin/Sorcin family. As to quaternary structure, in contrast to pefA, does not form homodimers in presence of Ca(2+). May form heterodimers with pefA.

Its subcellular location is the cytoplasm. It is found in the membrane. This is Penta-EF hand domain-containing protein 2 (pefB) from Dictyostelium discoideum (Social amoeba).